Reading from the N-terminus, the 266-residue chain is 2-C-methyl-D-erythritol 4-phosphate cytidylyltransferase (266 aa).

Basic and acidic residues predominate over residues 234–251; that stretch reads ADDARSAEARSAEARSEE. The interval 234-266 is disordered; it reads ADDARSAEARSAEARSEEPQFAGARSTDARSGG.

This sequence belongs to the IspD/TarI cytidylyltransferase family. IspD subfamily.

The catalysed reaction is 2-C-methyl-D-erythritol 4-phosphate + CTP + H(+) = 4-CDP-2-C-methyl-D-erythritol + diphosphate. The protein operates within isoprenoid biosynthesis; isopentenyl diphosphate biosynthesis via DXP pathway; isopentenyl diphosphate from 1-deoxy-D-xylulose 5-phosphate: step 2/6. Its function is as follows. Catalyzes the formation of 4-diphosphocytidyl-2-C-methyl-D-erythritol from CTP and 2-C-methyl-D-erythritol 4-phosphate (MEP). The chain is 2-C-methyl-D-erythritol 4-phosphate cytidylyltransferase from Frankia casuarinae (strain DSM 45818 / CECT 9043 / HFP020203 / CcI3).